Consider the following 523-residue polypeptide: MSQQVIIFDTTLRDGEQALQASLSAKEKLQIALALERMGVDVMEVGFPVSSPGDFESVQTIARTIKNSRVCALARCVEKDIDVAAQALKVADAFRIHTFIATSPMHIATKLRSTLDEVIERAVYMIKRARNYTDDVEFSCEDAGRTPVDDLARVVEAAINAGARTINIPDTVGYTMPFEFAGIISGLYERVPNIDKAIISVHTHDDLGIAVGNSLAAVHAGARQVEGAMNGIGERAGNCALEEVIMAIKVRKDIMNVHTNINHHEIWRTSQTVSQICNMPIPANKAIVGSGAFAHSSGIHQDGVLKNRENYEIMTPESIGLNQIQLNLTSRSGRAAVKHRMEEMGYKDTDYNMDHLYDAFLKLADKKGQVFDYDLEALAFINKQQEEPEHFRLDYFSVQSGSSDIATASVKLACGEEIKAEAANGNGPVDAIYQAINRITGYDVELVKYDLNAKGQGKDALGQVDIVVNHHGRRFHGVGLATDIVESSAKAMVHVLNNIWRAAEVEKELQRKAQNKENNKETV.

Residues 5-267 enclose the Pyruvate carboxyltransferase domain; sequence VIIFDTTLRD…HTNINHHEIW (263 aa). Mn(2+) is bound by residues aspartate 14, histidine 202, histidine 204, and asparagine 238. Residues 392–523 are regulatory domain; sequence RLDYFSVQSG…QNKENNKETV (132 aa).

It belongs to the alpha-IPM synthase/homocitrate synthase family. LeuA type 1 subfamily. In terms of assembly, homodimer. Requires Mn(2+) as cofactor.

It is found in the cytoplasm. The enzyme catalyses 3-methyl-2-oxobutanoate + acetyl-CoA + H2O = (2S)-2-isopropylmalate + CoA + H(+). The protein operates within amino-acid biosynthesis; L-leucine biosynthesis; L-leucine from 3-methyl-2-oxobutanoate: step 1/4. In terms of biological role, catalyzes the condensation of the acetyl group of acetyl-CoA with 3-methyl-2-oxobutanoate (2-ketoisovalerate) to form 3-carboxy-3-hydroxy-4-methylpentanoate (2-isopropylmalate). The polypeptide is 2-isopropylmalate synthase (Salmonella choleraesuis (strain SC-B67)).